A 276-amino-acid polypeptide reads, in one-letter code: MRESLKNSKRLVIKVGTSTLMYGNGHVNLRTIEKLAMVLSDLRNEGKEVILVSSGAIGVGCHKLQLPARPTDIPDLQAVASVGQSELMHIYSKFFGEYGQVVGQVLLTRDVTDFPISRENVMNTLESLLSRGIIPIVNENDTVAVEELEHVTKYGDNDLLSAIVARLVQADLLIMLSDIDGFYKSNPTTDPNAIMFSEINQITPEIEALAGGRGSKFGTGGMLTKLSAATYCMASHQKMILTNGKNPTIIFDIMQGAQVGTLFANKKEAFSHDRTH.

An ATP-binding site is contributed by lysine 14. The substrate site is built by serine 54, aspartate 141, and asparagine 157. Residues 177-178 and 219-225 contribute to the ATP site; these read SD and TGGMLTK.

This sequence belongs to the glutamate 5-kinase family.

The protein resides in the cytoplasm. It carries out the reaction L-glutamate + ATP = L-glutamyl 5-phosphate + ADP. The protein operates within amino-acid biosynthesis; L-proline biosynthesis; L-glutamate 5-semialdehyde from L-glutamate: step 1/2. Its function is as follows. Catalyzes the transfer of a phosphate group to glutamate to form L-glutamate 5-phosphate. The polypeptide is Glutamate 5-kinase (Listeria welshimeri serovar 6b (strain ATCC 35897 / DSM 20650 / CCUG 15529 / CIP 8149 / NCTC 11857 / SLCC 5334 / V8)).